Reading from the N-terminus, the 205-residue chain is Holliday junction branch migration complex subunit RuvA (205 aa).

The domain I stretch occupies residues 1–64; the sequence is MIGRIRGLLI…EDAQLLYGFI (64 aa). The interval 65 to 143 is domain II; the sequence is SKQERSLFRL…SLMEASVGSE (79 aa). Residues 144 to 156 form a flexible linker region; sequence REFMLQSNYTAPE. Residues 157–205 form a domain III region; sequence AVNTAEEDAIAALLSLGYKPAQASKAVSSVYTDGMSSETLIKSALKSML.

The protein belongs to the RuvA family. Homotetramer. Forms an RuvA(8)-RuvB(12)-Holliday junction (HJ) complex. HJ DNA is sandwiched between 2 RuvA tetramers; dsDNA enters through RuvA and exits via RuvB. An RuvB hexamer assembles on each DNA strand where it exits the tetramer. Each RuvB hexamer is contacted by two RuvA subunits (via domain III) on 2 adjacent RuvB subunits; this complex drives branch migration. In the full resolvosome a probable DNA-RuvA(4)-RuvB(12)-RuvC(2) complex forms which resolves the HJ.

It is found in the cytoplasm. Functionally, the RuvA-RuvB-RuvC complex processes Holliday junction (HJ) DNA during genetic recombination and DNA repair, while the RuvA-RuvB complex plays an important role in the rescue of blocked DNA replication forks via replication fork reversal (RFR). RuvA specifically binds to HJ cruciform DNA, conferring on it an open structure. The RuvB hexamer acts as an ATP-dependent pump, pulling dsDNA into and through the RuvAB complex. HJ branch migration allows RuvC to scan DNA until it finds its consensus sequence, where it cleaves and resolves the cruciform DNA. This Shewanella halifaxensis (strain HAW-EB4) protein is Holliday junction branch migration complex subunit RuvA.